The following is a 339-amino-acid chain: NmrA-like family domain-containing oxidoreductase notA (339 aa).

Residues 13–18 (GATGAQ), 39–43 (RKPDS), 60–61 (DG), 81–83 (TNS), lysine 140, and 164–167 (YMGI) each bind NADP(+).

The protein belongs to the NmrA-type oxidoreductase family.

Its function is as follows. NmrA-like family domain-containing oxidoreductase; part of the gene cluster that mediates the biosynthesis of notoamide, a fungal indole alkaloid that belongs to a family of natural products containing a characteristic bicyclo[2.2.2]diazaoctane core. The first step of notoamide biosynthesis involves coupling of L-proline and L-tryptophan by the bimodular NRPS notE, to produce cyclo-L-tryptophan-L-proline called brevianamide F. The reverse prenyltransferase notF then acts as a deoxybrevianamide E synthase and converts brevianamide F to deoxybrevianamide E via reverse prenylation at C-2 of the indole ring leading to the bicyclo[2.2.2]diazaoctane core. Deoxybrevianamide E is further hydroxylated at C-6 of the indole ring, likely catalyzed by the cytochrome P450 monooxygenase notG, to yield 6-hydroxy-deoxybrevianamide E. 6-hydroxy-deoxybrevianamide E is a specific substrate of the prenyltransferase notC for normal prenylation at C-7 to produce 6-hydroxy-7-prenyl-deoxybrevianamide, also called notoamide S. As the proposed pivotal branching point in notoamide biosynthesis, notoamide S can be diverted to notoamide E through an oxidative pyran ring closure putatively catalyzed by either notH cytochrome P450 monooxygenase or the notD FAD-linked oxidoreductase. This step would be followed by an indole 2,3-epoxidation-initiated pinacol-like rearrangement catalyzed by the notB FAD-dependent monooxygenase leading to the formation of notoamide C and notoamide D. On the other hand notoamide S is converted to notoamide T by notH (or notD), a bifunctional oxidase that also functions as the intramolecular Diels-Alderase responsible for generation of (+)-notoamide T. To generate antipodal (-)-notoaminide T, notH' (or notD') in Aspergillus versicolor is expected to catalyze a Diels-Alder reaction leading to the opposite stereochemistry. The remaining oxidoreductase notD (or notH) likely catalyzes the oxidative pyran ring formation to yield (+)-stephacidin A. The FAD-dependent monooxygenase notI is highly similar to notB and is predicted to catalyze a similar conversion from (+)-stephacidin A to (-)-notoamide B via the 2,3-epoxidation of (+)-stephacidin A followed by a pinacol-type rearrangement. Finally, it remains unclear which enzyme could be responsible for the final hydroxylation steps leading to notoamide A and sclerotiamide. In Aspergillus sp. (strain MF297-2), this protein is NmrA-like family domain-containing oxidoreductase notA.